A 183-amino-acid chain; its full sequence is MQKQVVVMDEAAIKRALTRVSYEIIERNKGTKNLALVGIKTRGIYLAERLHKRILEIEGIDVPVGDIDITLYRDDLSFKDDKTREPAVHGTNIPFDINGKKVVLVDDVLYTGRTVRAAMDALMDVGRPAQIHLAVLADRGHRELPIRADYVGKNIPTSGNERVEVRLTDVDHAEDAVIINKNE.

Residues 102 to 114 (VVLVDDVLYTGRT) carry the PRPP-binding motif.

This sequence belongs to the purine/pyrimidine phosphoribosyltransferase family. PyrR subfamily. Homodimer and homohexamer; in equilibrium.

The catalysed reaction is UMP + diphosphate = 5-phospho-alpha-D-ribose 1-diphosphate + uracil. Functionally, regulates transcriptional attenuation of the pyrimidine nucleotide (pyr) operon by binding in a uridine-dependent manner to specific sites on pyr mRNA. This disrupts an antiterminator hairpin in the RNA and favors formation of a downstream transcription terminator, leading to a reduced expression of downstream genes. Its function is as follows. Also displays a weak uracil phosphoribosyltransferase activity which is not physiologically significant. In Listeria monocytogenes serotype 4a (strain HCC23), this protein is Bifunctional protein PyrR.